We begin with the raw amino-acid sequence, 128 residues long: Glycophorin-C (128 aa).

Positions 1-12 (MWSTRSPNSTAW) are enriched in polar residues. The segment at 1–48 (MWSTRSPNSTAWPLSLEPDPGMASASTTMHTTTIAEPDPGMSGWPDGR) is disordered. Residues 1-57 (MWSTRSPNSTAWPLSLEPDPGMASASTTMHTTTIAEPDPGMSGWPDGRMETSTPTIM) are Extracellular-facing. Serine 3 is a glycosylation site (O-linked (GalNAc...) serine). A glycan (O-linked (GalNAc...) threonine) is linked at threonine 4. Serine 6 is a glycosylation site (O-linked (GalNAc...) serine). N-linked (GlcNAc...) asparagine glycosylation occurs at asparagine 8. Serine 9 carries an O-linked (GalNAc...) serine glycan. Residue threonine 10 is glycosylated (O-linked (GalNAc...) threonine). Residues serine 15, serine 24, and serine 26 are each glycosylated (O-linked (GalNAc...) serine). Positions 22-33 (MASASTTMHTTT) are enriched in low complexity. 5 O-linked (GalNAc...) threonine glycosylation sites follow: threonine 27, threonine 28, threonine 31, threonine 32, and threonine 33. Serine 42 carries O-linked (GalNAc...) serine glycosylation. Residues 58–81 (DIVVIAGVIAAVAIVLVSLLFVML) traverse the membrane as a helical; Signal-anchor for type III membrane protein segment. At 82–128 (RYMYRHKGTYHTNEAKGTEFAESADAALQGDPALQDAGDSSRKEYFI) the chain is on the cytoplasmic side. 2 positions are modified to phosphoserine: serine 104 and serine 122. The disordered stretch occupies residues 108–128 (ALQGDPALQDAGDSSRKEYFI).

Belongs to the glycophorin-C family. Post-translationally, O-glycosylated with core 1 or possibly core 8 glycans. In terms of tissue distribution, glycophorin-C is expressed in erythrocytes. Glycophorin-D and IsoGPC are ubiquitously expressed.

Its subcellular location is the cell membrane. Its function is as follows. This protein is a minor sialoglycoprotein in human erythrocyte membranes. The blood group Gerbich antigens and receptors for Plasmodium falciparum merozoites are most likely located within the extracellular domain. Glycophorin-C plays an important role in regulating the stability of red cells. In Homo sapiens (Human), this protein is Glycophorin-C (GYPC).